The primary structure comprises 277 residues: Diaminopimelate epimerase (277 aa).

Asn11 and Asn65 together coordinate substrate. The Proton donor role is filled by Cys74. Residues 75 to 76 (GN), Asn180, and 198 to 199 (ER) each bind substrate. Cys208 serves as the catalytic Proton acceptor. A substrate-binding site is contributed by 209-210 (GT).

It belongs to the diaminopimelate epimerase family. In terms of assembly, homodimer.

The protein resides in the cytoplasm. It carries out the reaction (2S,6S)-2,6-diaminopimelate = meso-2,6-diaminopimelate. The protein operates within amino-acid biosynthesis; L-lysine biosynthesis via DAP pathway; DL-2,6-diaminopimelate from LL-2,6-diaminopimelate: step 1/1. Catalyzes the stereoinversion of LL-2,6-diaminopimelate (L,L-DAP) to meso-diaminopimelate (meso-DAP), a precursor of L-lysine and an essential component of the bacterial peptidoglycan. This is Diaminopimelate epimerase from Gemmatimonas aurantiaca (strain DSM 14586 / JCM 11422 / NBRC 100505 / T-27).